We begin with the raw amino-acid sequence, 508 residues long: Bifunctional purine biosynthesis protein PurH (508 aa).

The MGS-like domain occupies 1–144 (MTRALLSVSD…KNFAGVLPIV (144 aa)).

The protein belongs to the PurH family.

It carries out the reaction (6R)-10-formyltetrahydrofolate + 5-amino-1-(5-phospho-beta-D-ribosyl)imidazole-4-carboxamide = 5-formamido-1-(5-phospho-D-ribosyl)imidazole-4-carboxamide + (6S)-5,6,7,8-tetrahydrofolate. The enzyme catalyses IMP + H2O = 5-formamido-1-(5-phospho-D-ribosyl)imidazole-4-carboxamide. Its pathway is purine metabolism; IMP biosynthesis via de novo pathway; 5-formamido-1-(5-phospho-D-ribosyl)imidazole-4-carboxamide from 5-amino-1-(5-phospho-D-ribosyl)imidazole-4-carboxamide (10-formyl THF route): step 1/1. The protein operates within purine metabolism; IMP biosynthesis via de novo pathway; IMP from 5-formamido-1-(5-phospho-D-ribosyl)imidazole-4-carboxamide: step 1/1. In Leuconostoc citreum (strain KM20), this protein is Bifunctional purine biosynthesis protein PurH.